The primary structure comprises 269 residues: Dermonecrotic toxin SpeSicTox-betaIB3 (269 aa).

H5 is a catalytic residue. Residues E25 and D27 each contribute to the Mg(2+) site. H41 (nucleophile) is an active-site residue. 2 cysteine pairs are disulfide-bonded: C45-C51 and C47-C191. Residue D85 participates in Mg(2+) binding.

The protein belongs to the arthropod phospholipase D family. Class II subfamily. Requires Mg(2+) as cofactor. Expressed by the venom gland.

It localises to the secreted. The enzyme catalyses an N-(acyl)-sphingosylphosphocholine = an N-(acyl)-sphingosyl-1,3-cyclic phosphate + choline. The catalysed reaction is an N-(acyl)-sphingosylphosphoethanolamine = an N-(acyl)-sphingosyl-1,3-cyclic phosphate + ethanolamine. It catalyses the reaction a 1-acyl-sn-glycero-3-phosphocholine = a 1-acyl-sn-glycero-2,3-cyclic phosphate + choline. It carries out the reaction a 1-acyl-sn-glycero-3-phosphoethanolamine = a 1-acyl-sn-glycero-2,3-cyclic phosphate + ethanolamine. In terms of biological role, dermonecrotic toxins cleave the phosphodiester linkage between the phosphate and headgroup of certain phospholipids (sphingolipid and lysolipid substrates), forming an alcohol (often choline) and a cyclic phosphate. This toxin acts on sphingomyelin (SM). It may also act on ceramide phosphoethanolamine (CPE), lysophosphatidylcholine (LPC) and lysophosphatidylethanolamine (LPE), but not on lysophosphatidylserine (LPS), and lysophosphatidylglycerol (LPG). It acts by transphosphatidylation, releasing exclusively cyclic phosphate products as second products. Induces dermonecrosis, hemolysis, increased vascular permeability, edema, inflammatory response, and platelet aggregation. In Sicarius peruensis (Six-eyed sand spider), this protein is Dermonecrotic toxin SpeSicTox-betaIB3.